Consider the following 247-residue polypeptide: UDP-2,3-diacylglucosamine hydrolase (247 aa).

5 residues coordinate Mn(2+): aspartate 8, histidine 10, aspartate 41, asparagine 79, and histidine 114. A substrate-binding site is contributed by 79-80 (NR). Substrate-binding residues include aspartate 122, serine 160, aspartate 171, glutamine 174, and histidine 202. Residues histidine 202 and histidine 204 each coordinate Mn(2+).

This sequence belongs to the LpxH family. It depends on Mn(2+) as a cofactor.

Its subcellular location is the cell inner membrane. It carries out the reaction UDP-2-N,3-O-bis[(3R)-3-hydroxytetradecanoyl]-alpha-D-glucosamine + H2O = 2-N,3-O-bis[(3R)-3-hydroxytetradecanoyl]-alpha-D-glucosaminyl 1-phosphate + UMP + 2 H(+). The protein operates within glycolipid biosynthesis; lipid IV(A) biosynthesis; lipid IV(A) from (3R)-3-hydroxytetradecanoyl-[acyl-carrier-protein] and UDP-N-acetyl-alpha-D-glucosamine: step 4/6. Its function is as follows. Hydrolyzes the pyrophosphate bond of UDP-2,3-diacylglucosamine to yield 2,3-diacylglucosamine 1-phosphate (lipid X) and UMP by catalyzing the attack of water at the alpha-P atom. Involved in the biosynthesis of lipid A, a phosphorylated glycolipid that anchors the lipopolysaccharide to the outer membrane of the cell. This Xanthomonas campestris pv. campestris (strain B100) protein is UDP-2,3-diacylglucosamine hydrolase.